A 764-amino-acid chain; its full sequence is 5-methyltetrahydropteroyltriglutamate--homocysteine methyltransferase (764 aa).

5-methyltetrahydropteroyltri-L-glutamate contacts are provided by residues 16–19 (RELK) and Lys115. L-homocysteine is bound by residues 435–437 (IGS) and Glu488. L-methionine-binding positions include 435–437 (IGS) and Glu488. Residues 519-520 (RC) and Trp565 contribute to the 5-methyltetrahydropteroyltri-L-glutamate site. Asp603 serves as a coordination point for L-homocysteine. Asp603 is an L-methionine binding site. Residue Glu609 participates in 5-methyltetrahydropteroyltri-L-glutamate binding. The Zn(2+) site is built by His645, Cys647, and Glu669. His698 (proton donor) is an active-site residue. Cys730 contributes to the Zn(2+) binding site.

This sequence belongs to the vitamin-B12 independent methionine synthase family. Zn(2+) serves as cofactor.

It catalyses the reaction 5-methyltetrahydropteroyltri-L-glutamate + L-homocysteine = tetrahydropteroyltri-L-glutamate + L-methionine. It participates in amino-acid biosynthesis; L-methionine biosynthesis via de novo pathway; L-methionine from L-homocysteine (MetE route): step 1/1. Its function is as follows. Catalyzes the transfer of a methyl group from 5-methyltetrahydrofolate to homocysteine resulting in methionine formation. This Burkholderia pseudomallei (strain 1106a) protein is 5-methyltetrahydropteroyltriglutamate--homocysteine methyltransferase.